The following is a 386-amino-acid chain: S-adenosylmethionine synthase (386 aa).

His16 serves as a coordination point for ATP. Mg(2+) is bound at residue Asp18. Glu44 lines the K(+) pocket. The L-methionine site is built by Glu57 and Gln100. The flexible loop stretch occupies residues Gln100–Arg110. Residues Asp165 to Lys167, Asp240, Arg246 to Lys247, Ala263, and Lys267 each bind ATP. An L-methionine-binding site is contributed by Asp240. L-methionine is bound at residue Lys271.

This sequence belongs to the AdoMet synthase family. As to quaternary structure, homotetramer; dimer of dimers. Requires Mg(2+) as cofactor. K(+) serves as cofactor.

Its subcellular location is the cytoplasm. The catalysed reaction is L-methionine + ATP + H2O = S-adenosyl-L-methionine + phosphate + diphosphate. Its pathway is amino-acid biosynthesis; S-adenosyl-L-methionine biosynthesis; S-adenosyl-L-methionine from L-methionine: step 1/1. Functionally, catalyzes the formation of S-adenosylmethionine (AdoMet) from methionine and ATP. The overall synthetic reaction is composed of two sequential steps, AdoMet formation and the subsequent tripolyphosphate hydrolysis which occurs prior to release of AdoMet from the enzyme. This is S-adenosylmethionine synthase from Francisella philomiragia subsp. philomiragia (strain ATCC 25017 / CCUG 19701 / FSC 153 / O#319-036).